A 445-amino-acid polypeptide reads, in one-letter code: GTPase Der (445 aa).

2 consecutive EngA-type G domains span residues 3–167 (PVIA…NLPD) and 180–353 (IKLA…ASAN). GTP contacts are provided by residues 9–16 (GRPNVGKS), 56–60 (DTGGF), 119–122 (NKAE), 186–193 (GRPNVGKS), 233–237 (DTAGL), and 298–301 (NKWD). The KH-like domain occupies 354 to 438 (RKMSTPVLTR…PLRIQLKSSV (85 aa)).

It belongs to the TRAFAC class TrmE-Era-EngA-EngB-Septin-like GTPase superfamily. EngA (Der) GTPase family. Associates with the 50S ribosomal subunit.

In terms of biological role, GTPase that plays an essential role in the late steps of ribosome biogenesis. This is GTPase Der from Polaromonas naphthalenivorans (strain CJ2).